Here is a 240-residue protein sequence, read N- to C-terminus: uncharacterized protein (240 aa).

Residues 1–11 (MGMTPRRKRRG) are compositionally biased toward basic residues. Residues 1–32 (MGMTPRRKRRGGAVQITRPTGRPRTPTTQTTK) form a disordered region. Positions 17 to 31 (TRPTGRPRTPTTQTT) are enriched in low complexity. 6 helical membrane-spanning segments follow: residues 36-56 (WVVGGTTILTFVALLYLVELI), 93-113 (LMANTIPLLVLGFLMTLAGLS), 115-135 (FVWATAIIWILGGLGTWLIGN), 146-166 (IGASGLIFGWLAFLLVFGLFV), 172-192 (IVIGLVVLFVYGGILLGAMPV), and 198-218 (GVSWQGHLSGAVAGVVAAYLL).

It to M.leprae ML1171.

The protein localises to the cell membrane. This is an uncharacterized protein from Mycobacterium tuberculosis (strain CDC 1551 / Oshkosh).